The following is a 301-amino-acid chain: (R)-2-haloacid dehalogenase (301 aa).

This sequence belongs to the HAD-like hydrolase superfamily. S-2-haloalkanoic acid dehalogenase family. Homotetramer.

It carries out the reaction an (R)-2-haloacid + H2O = a (2S)-2-hydroxycarboxylate + a halide anion + H(+). Catalyzes the hydrolytic dehalogenation of small (R)-2-haloalkanoic acids to yield the corresponding (S)-2-hydroxyalkanoic acids. Acts on acids of short chain lengths, C(2) to C(4), with inversion of configuration at C-2. The protein is (R)-2-haloacid dehalogenase (hadD) of Pseudomonas putida (Arthrobacter siderocapsulatus).